The sequence spans 203 residues: Large ribosomal subunit protein uL18 (203 aa).

It belongs to the universal ribosomal protein uL18 family. As to quaternary structure, part of the 50S ribosomal subunit. Contacts the 5S and 23S rRNAs.

Functionally, this is one of the proteins that bind and probably mediate the attachment of the 5S RNA into the large ribosomal subunit, where it forms part of the central protuberance. The chain is Large ribosomal subunit protein uL18 from Pyrococcus abyssi (strain GE5 / Orsay).